Consider the following 180-residue polypeptide: MQQKLENIKFVITDVDGVLTDGQLHYDANGEAIKSFHVRDGLGIKMLMDADIQVAVLSGRDSPILRRRIADLGIKLFFLGKLEKETACFDLMKQAGVTAEQTAYIGDDSVDLPAFAACGTSFAVADAPIYVKNAVDHVLSTHGGKGAFREMSDMILQAQGKSSVFDTAQGFLKSVKSMGQ.

2 residues coordinate Mg(2+): D14 and D16. Substrate is bound by residues D16, 37-41 (HVRDG), K45, R60, R68, and K84. D107 serves as a coordination point for Mg(2+).

This sequence belongs to the KdsC family. Homotetramer. It depends on Mg(2+) as a cofactor.

The enzyme catalyses 3-deoxy-alpha-D-manno-2-octulosonate-8-phosphate + H2O = 3-deoxy-alpha-D-manno-oct-2-ulosonate + phosphate. Functionally, catalyzes the hydrolysis of 3-deoxy-D-manno-octulosonate 8-phosphate (KDO 8-P) to 3-deoxy-D-manno-octulosonate (KDO) and inorganic phosphate. This chain is 3-deoxy-D-manno-octulosonate 8-phosphate phosphatase KdsC, found in Haemophilus influenzae (strain ATCC 51907 / DSM 11121 / KW20 / Rd).